Consider the following 352-residue polypeptide: [LysW]-L-2-aminoadipate/[LysW]-L-glutamate phosphate reductase (352 aa).

13–16 (SGYT) serves as a coordination point for NADP(+). Cys153 is an active-site residue. Asn319 contacts NADP(+).

It belongs to the NAGSA dehydrogenase family. Type 1 subfamily. LysY sub-subfamily.

The protein localises to the cytoplasm. It carries out the reaction [amino-group carrier protein]-C-terminal-N-(1-carboxy-5-oxopentan-1-yl)-L-glutamine + phosphate + NADP(+) = [amino-group carrier protein]-C-terminal-N-(1-carboxy-5-phosphooxy-5-oxopentan-1-yl)-L-glutamine + NADPH + H(+). The catalysed reaction is [amino-group carrier protein]-C-terminal-gamma-(L-glutamyl-5-semialdehyde)-L-glutamate + phosphate + NADP(+) = [amino-group carrier protein]-C-terminal-gamma-(5-phospho-L-glutamyl)-L-glutamate + NADPH + H(+). The protein operates within amino-acid biosynthesis; L-lysine biosynthesis via AAA pathway; L-lysine from L-alpha-aminoadipate (Thermus route): step 3/5. It participates in amino-acid biosynthesis; L-arginine biosynthesis. Its function is as follows. Involved in both the arginine and lysine biosynthetic pathways. This is [LysW]-L-2-aminoadipate/[LysW]-L-glutamate phosphate reductase from Saccharolobus solfataricus (strain ATCC 35092 / DSM 1617 / JCM 11322 / P2) (Sulfolobus solfataricus).